The primary structure comprises 248 residues: Mannose-binding protein C (248 aa).

An N-terminal signal peptide occupies residues 1-20 (MSLFPSLPLLLLSMVAASYS). The Collagen-like domain occupies 42-99 (GINGFPGKDGRDGTKGEKGEPGQGLRGLQGPPGKLGPPGNPGPSGSPGPKGQKGDPGK). The interval 43–113 (INGFPGKDGR…DSSLAASERK (71 aa)) is disordered. Position 47 is a 4-hydroxyproline (proline 47). The span at 49–61 (KDGRDGTKGEKGE) shows a compositional bias: basic and acidic residues. 4-hydroxyproline is present on residues proline 73, proline 79, proline 82, and proline 88. Residues 75–87 (KLGPPGNPGPSGS) show a composition bias toward pro residues. Positions 93-102 (QKGDPGKSPD) are enriched in basic and acidic residues. Residues 112–130 (RKALQTEMARIKKWLTFSL) are a coiled coil. Positions 134 to 245 (VGNKFFLTNG…CSTSHLAVCE (112 aa)) constitute a C-type lectin domain. Cystine bridges form between cysteine 155–cysteine 244 and cysteine 222–cysteine 236.

As to quaternary structure, oligomeric complex of 3 or more homotrimers. Interacts with MASP1 and MASP2. Interacts with MEP1A and MEP1B and may inhibit their catalytic activity. Hydroxylation on proline residues within the sequence motif, GXPG, is most likely to be 4-hydroxy as this fits the requirement for 4-hydroxylation in vertebrates.

Its subcellular location is the secreted. Calcium-dependent lectin involved in innate immune defense. Binds mannose, fucose and N-acetylglucosamine on different microorganisms and activates the lectin complement pathway. Binds to late apoptotic cells, as well as to apoptotic blebs and to necrotic cells, but not to early apoptotic cells, facilitating their uptake by macrophages. This Gorilla gorilla gorilla (Western lowland gorilla) protein is Mannose-binding protein C (MBL2).